We begin with the raw amino-acid sequence, 62 residues long: Alpha-lytic protease L1 (62 aa).

S48 functions as the Charge relay system in the catalytic mechanism.

This sequence belongs to the peptidase S1 family. As to quaternary structure, monomer.

The protein resides in the secreted. It carries out the reaction Preferential cleavage: Ala-|-Xaa, Val-|-Xaa in bacterial cell walls, elastin and other proteins.. With respect to regulation, inhibited by phenylmethanesulfonyl fluoride (PMSF) and p-chloromercuribenzoate (PCMB). Functionally, has bacteriolytic activity. This chain is Alpha-lytic protease L1, found in Lysobacter sp. (strain XL1).